The following is a 245-amino-acid chain: tRNA (guanine-N(7)-)-methyltransferase (245 aa).

Positions 71, 96, 123, and 146 each coordinate S-adenosyl-L-methionine. Residue Asp146 is part of the active site. Lys150 provides a ligand contact to substrate. Residues 152–157 are interaction with RNA; the sequence is KHNKRR. Substrate is bound by residues Asp182 and 224-227; that span reads TKFE.

This sequence belongs to the class I-like SAM-binding methyltransferase superfamily. TrmB family.

The enzyme catalyses guanosine(46) in tRNA + S-adenosyl-L-methionine = N(7)-methylguanosine(46) in tRNA + S-adenosyl-L-homocysteine. The protein operates within tRNA modification; N(7)-methylguanine-tRNA biosynthesis. Functionally, catalyzes the formation of N(7)-methylguanine at position 46 (m7G46) in tRNA. The polypeptide is tRNA (guanine-N(7)-)-methyltransferase (Albidiferax ferrireducens (strain ATCC BAA-621 / DSM 15236 / T118) (Rhodoferax ferrireducens)).